Here is a 557-residue protein sequence, read N- to C-terminus: Nucleolin 1 (557 aa).

Disordered stretches follow at residues 1 to 297 (MGKS…GGSK), 376 to 398 (GERG…GDGG), and 474 to 557 (LVVD…FGDE). Over residues 49 to 63 (QKEKAVKKVPKKVES) the composition is skewed to basic and acidic residues. Acidic residues-rich tracts occupy residues 64 to 74 (SDDSDSESEEE), 91 to 101 (ESSDDSSSDDE), and 124 to 135 (SSSDDDSSDEEV). A compositionally biased stretch (low complexity) spans 174-184 (AKIAKPAAKDS). Acidic residues predominate over residues 186–197 (SSDDDSDEDSED). Residues 203–217 (KKAAPAAAKAASSSD) show a composition bias toward low complexity. The segment covering 218–229 (SSDEDSDEESED) has biased composition (acidic residues). Basic and acidic residues predominate over residues 230-247 (EKPAQKKADTKASKKSSS). Over residues 249–263 (ESSESEEDESEDEEE) the composition is skewed to acidic residues. Basic and acidic residues predominate over residues 264–281 (TPKKKSSDVEMVDAEKSS). Residues 297–374 (KTLFAANLSF…REIRLDIAQE (78 aa)) form the RRM 1 domain. One can recognise an RRM 2 domain in the interval 401 to 481 (KKIFVKGFDA…FYLVVDEPRP (81 aa)). Residues 485-503 (SSGGGGFGRGNGRFGSGGG) are compositionally biased toward gly residues.

In terms of assembly, interacts with THAL in the nucleus. As to expression, expressed in roots, leaves, shoots and flowers.

The protein resides in the nucleus. It is found in the nucleolus. In terms of biological role, involved in pre-rRNA processing and ribosome assembly. Is associated with intranucleolar chromatin and pre-ribosomal particles and plays a role in controlling activation and repression of a specific subset of rRNA genes located in distinctive nucleolar organizer regions. Binds specifically rDNA chromatin and may be required to maintain rDNA chromatin structure, but is probably not required for the overall histone methylation status of 45S rRNA genes. Involved in leaf polarity establishment by functioning cooperatively with AS1 to repress abaxial genes ARF3, ARF4, KAN1, KAN2, YAB1 and YAB5, and the knox homeobox genes KNAT1, KNAT2, KNAT6, and STM to promote adaxial development in leaf primordia at shoot apical meristems at high temperatures. This is Nucleolin 1 from Arabidopsis thaliana (Mouse-ear cress).